The primary structure comprises 104 residues: Gastrin (104 aa).

The signal sequence occupies residues 1-21 (MQRLCAHALILVLALAAFCEA). A propeptide spanning residues 22–58 (SWKPHSQLQDAPVAPGANKGQEPLRMDRLGPASHPRR) is cleaved from the precursor. The disordered stretch occupies residues 26–70 (HSQLQDAPVAPGANKGQEPLRMDRLGPASHPRRQLGLQDPPHMVA). A Sulfotyrosine modification is found at Y87. At F92 the chain carries Phenylalanine amide. At S96 the chain carries Phosphoserine. Residues 96 to 104 (SAEEGDQHP) constitute a propeptide that is removed on maturation.

It belongs to the gastrin/cholecystokinin family. Sulfation enhances proteolytic processing, and blocks peptide degradation. Levels of sulfation differ between proteolytically-cleaved gastrins and between tissues.

It localises to the secreted. Its function is as follows. Gastrin stimulates the stomach mucosa to produce and secrete hydrochloric acid and the pancreas to secrete its digestive enzymes. It also stimulates smooth muscle contraction and increases blood circulation and water secretion in the stomach and intestine. This chain is Gastrin (GAST), found in Ovis aries (Sheep).